Reading from the N-terminus, the 143-residue chain is Anti-sigma F factor (143 aa).

It belongs to the anti-sigma-factor family.

It carries out the reaction L-seryl-[protein] + ATP = O-phospho-L-seryl-[protein] + ADP + H(+). The catalysed reaction is L-threonyl-[protein] + ATP = O-phospho-L-threonyl-[protein] + ADP + H(+). Functionally, binds to sigma F and blocks its ability to form an RNA polymerase holoenzyme (E-sigma F). Phosphorylates SpoIIAA on a serine residue. This phosphorylation may enable SpoIIAA to act as an anti-anti-sigma factor that counteracts SpoIIAB and thus releases sigma F from inhibition. The protein is Anti-sigma F factor of Clostridium beijerinckii (strain ATCC 51743 / NCIMB 8052) (Clostridium acetobutylicum).